Consider the following 131-residue polypeptide: Antiholin (131 aa).

At M1–D14 the chain is on the periplasmic side. Cytoplasmic loops occupy residues M1 to K52 and L38 to S49. The helical transmembrane segment at E15–V37 threads the bilayer. The helical transmembrane segment at I53–V75 threads the bilayer. Residues P76–P78 are Periplasmic-facing. A helical membrane pass occupies residues A79 to G101. Residues H102–K131 are Cytoplasmic-facing.

The protein belongs to the bacteriophage holin family. phi29likevirus holin subfamily. Homomultimer. Interacts with isoform Antiholin; this interaction blocks the holin homomultimerization and delays host cell lysis.

The protein resides in the host cell inner membrane. Accumulates harmlessly in the cytoplasmic membrane until it reaches a critical concentration that triggers the formation of micron-scale pores (holes) causing host cell membrane disruption and endolysin escape into the periplasmic space. Determines the precise timing of host cell lysis. Participates with the endolysin and spanin proteins in the sequential events which lead to the programmed host cell lysis releasing the mature viral particles from the host cell. Its function is as follows. Counteracts the aggregation of the holin molecules and thus of pore formation. This is Antiholin (14) from Bacillus subtilis (Bacteriophage phi-29).